The following is a 402-amino-acid chain: MNEFPVVLVINCGSSSIKFSVLNASDCEVLMSGIADGINSENAFLSVNGGEPAPLAHHSYEGALKAIAFELEKRNLNDNVALIGHRIAHGGSIFTESAIITDEVIDNIRRVSPLAPLHNYANLSGIESAQQLFPGVTQVAVFDTSFHQTMAPEAYLYGLPWKYYEELGVRRYGFHGTSHRYVSQRAHSLLNLAEDDSGLVVAHLGNGASICAVRNGQSVDTSMGMTPLEGLMMGTRSGDVDFGAMSWVASQTNQSLGDLERVVNKESGLLGISGLSSDLRVLEKAWHEGHERAQLAIKTFVHRIARHIAGHAASLHRLDGIIFTGGIGENSSLIRRLVMEHLAVLGVEIDTEMNNRSNSFGERIVSSENARVICAVIPTNEEKMIALDAIHLGKVNAPAEFA.

ATP contacts are provided by Asn11 and Lys18. Residue Asn11 participates in Mg(2+) binding. Arg86 provides a ligand contact to substrate. Asp143 acts as the Proton donor/acceptor in catalysis. ATP-binding positions include His175, 203-207 (HLGNG), 278-280 (DLR), and 326-330 (GIGEN).

This sequence belongs to the acetokinase family. TdcD subfamily. In terms of assembly, homodimer. Mg(2+) is required as a cofactor.

It catalyses the reaction propanoate + ATP = propanoyl phosphate + ADP. It functions in the pathway amino-acid degradation; L-threonine degradation via propanoate pathway; propanoate from L-threonine: step 4/4. Its function is as follows. Catalyzes the conversion of propionyl phosphate and ADP to propionate and ATP. The polypeptide is Propionate kinase (Escherichia coli O6:H1 (strain CFT073 / ATCC 700928 / UPEC)).